A 945-amino-acid polypeptide reads, in one-letter code: Kinesin-like protein KIN-7F (945 aa).

The Kinesin motor domain maps to 34–356 (RILVSVRLRP…LLFASCAKEV (323 aa)). Position 120-127 (120-127 (GQTSSGKT)) interacts with ATP. A coiled-coil region spans residues 365 to 437 (VMSDKALVKQ…QDLLQVVGDN (73 aa)). 2 disordered regions span residues 484–512 (RRVA…SVSS) and 553–588 (NECL…MNSR). Composition is skewed to polar residues over residues 495-512 (QAEN…SVSS) and 560-587 (AVGS…SMNS).

It belongs to the TRAFAC class myosin-kinesin ATPase superfamily. Kinesin family. KIN-7 subfamily. In terms of assembly, binds microtubules.

In terms of biological role, binds ATP/ADP in vitro. Possesses low ATPase activity but high affinity for microtubules. The protein is Kinesin-like protein KIN-7F of Oryza sativa subsp. japonica (Rice).